We begin with the raw amino-acid sequence, 124 residues long: MMIMKVKEVMNKDFIKISPNDIGGEVVQTLYKEKKNYAPVIEDGKLVGWITALDLLIGCKHSKIEDLMLLIDEIKILKENDEVTDELIDEIIKNEDIAYPVINDRDEVVGTLSVFDLLKYYKNR.

CBS domains lie at 10-67 (MNKD…IEDL) and 70-124 (LIDE…YKNR).

In terms of assembly, exhibits a pH-dependent oligomerization state: at pH 7, the dominant species is a dimer, where each monomer is a two-CBS domain protein, and at pH 4.5-4.8, the dominant species is a tetramer, with an oblong shape. At pH 2.5, there is formation of intermolecular hydrogen bonds, suggesting the presence of high-molecular weight species. The physiological dimeric species is thermal and chemically very stable.

The chain is CBS domain-containing protein MJ0729 from Methanocaldococcus jannaschii (strain ATCC 43067 / DSM 2661 / JAL-1 / JCM 10045 / NBRC 100440) (Methanococcus jannaschii).